The following is a 134-amino-acid chain: Retinol-binding protein 2 (134 aa).

Residues Lys41 and Gln109 each contribute to the all-trans-retinol site.

This sequence belongs to the calycin superfamily. Fatty-acid binding protein (FABP) family.

Its subcellular location is the cytoplasm. In terms of biological role, intracellular transport of retinol. This is Retinol-binding protein 2 (Rbp2) from Rattus norvegicus (Rat).